Consider the following 1119-residue polypeptide: G8 domain-containing protein DDB_G0288475 (1119 aa).

The N-terminal stretch at 1–22 (MKYSSFLLLFIYIFFILNNINA) is a signal peptide. The G8 domain occupies 276-404 (TIWTSGVVPL…YHNTWTKLAA (129 aa)). N-linked (GlcNAc...) asparagine glycosylation is found at Asn-308, Asn-559, Asn-736, Asn-854, Asn-968, Asn-1035, Asn-1056, and Asn-1070.

Belongs to the comF family.

The protein resides in the secreted. This chain is G8 domain-containing protein DDB_G0288475, found in Dictyostelium discoideum (Social amoeba).